An 808-amino-acid chain; its full sequence is Sucrose synthase 2 (808 aa).

Ser10 bears the Phosphoserine; by CPK mark. The segment at 272 to 749 (MMFNVVILSP…GLQRIYEKYT (478 aa)) is GT-B glycosyltransferase.

This sequence belongs to the glycosyltransferase 1 family. Plant sucrose synthase subfamily. In terms of assembly, homotetramer or heterotetramer with SUS1. Phosphorylated at Ser-10 by CPK23 in developing seeds. In terms of tissue distribution, predominantly expressed in the leaf tissues. Expressed in seeds, and at lower levels in roots. Expressed in leaf mesophyll and phloem (at protein level).

The catalysed reaction is an NDP-alpha-D-glucose + D-fructose = a ribonucleoside 5'-diphosphate + sucrose + H(+). Activated by phosphorylation at Ser-10 by CPK23. Its function is as follows. Sucrose-cleaving enzyme that provides UDP-glucose and fructose for various metabolic pathways. Functions in developing seeds by supplying substrates for the biosynthesis of storage products. The chain is Sucrose synthase 2 (SUS2) from Oryza sativa subsp. japonica (Rice).